The following is a 443-amino-acid chain: Ribulose bisphosphate carboxylase large chain (443 aa).

Lys7 is subject to N6,N6,N6-trimethyllysine. Substrate is bound by residues Asn116 and Thr166. The active-site Proton acceptor is the Lys168. Position 170 (Lys170) interacts with substrate. Positions 194, 196, and 197 each coordinate Mg(2+). Lys194 is subject to N6-carboxylysine. His287 functions as the Proton acceptor in the catalytic mechanism. Substrate-binding residues include Arg288, His320, and Ser372.

Belongs to the RuBisCO large chain family. Type I subfamily. In terms of assembly, heterohexadecamer of 8 large chains and 8 small chains; disulfide-linked. The disulfide link is formed within the large subunit homodimers. Mg(2+) is required as a cofactor. The disulfide bond which can form in the large chain dimeric partners within the hexadecamer appears to be associated with oxidative stress and protein turnover.

It localises to the plastid. The protein localises to the chloroplast. The catalysed reaction is 2 (2R)-3-phosphoglycerate + 2 H(+) = D-ribulose 1,5-bisphosphate + CO2 + H2O. It carries out the reaction D-ribulose 1,5-bisphosphate + O2 = 2-phosphoglycolate + (2R)-3-phosphoglycerate + 2 H(+). In terms of biological role, ruBisCO catalyzes two reactions: the carboxylation of D-ribulose 1,5-bisphosphate, the primary event in carbon dioxide fixation, as well as the oxidative fragmentation of the pentose substrate in the photorespiration process. Both reactions occur simultaneously and in competition at the same active site. The polypeptide is Ribulose bisphosphate carboxylase large chain (Abies homolepis (Nikko fir)).